The primary structure comprises 341 residues: DNA fragmentation factor subunit beta (341 aa).

The CIDE-N domain maps to 7 to 83; that stretch reads KPKTFKLRSL…LLTAGQTWQG (77 aa).

In terms of assembly, heterodimer of DFFA and DFFB. Interacts with H1-1.

It localises to the cytoplasm. The protein localises to the nucleus. Inhibited by DFFA (DFF45). Interacts with HIST1H1A. Functionally, nuclease that induces DNA fragmentation and chromatin condensation during apoptosis. Degrades naked DNA and induces apoptotic morphology. This Bos taurus (Bovine) protein is DNA fragmentation factor subunit beta (DFFB).